The sequence spans 737 residues: Prospero homeobox protein 1 (737 aa).

Residues 1-28 (MPDHDSTALLSRQTKRRRVDIGVKRTVG) are interaction with RORG. The segment covering 103 to 135 (KNGGTEPSFQASGLSSTGSEVHQEDICSNSSRD) has biased composition (polar residues). A disordered region spans residues 103–147 (KNGGTEPSFQASGLSSTGSEVHQEDICSNSSRDSPPECLSPFGRP). Phosphoserine occurs at positions 177, 179, 199, 291, and 295. The tract at residues 178 to 221 (HSPSVALRGNENEREMAPQSVSPRESYRENKRKQKLPQQQQQSF) is disordered. A compositionally biased stretch (basic and acidic residues) spans 320–337 (MAENKPKREGSNKERDHG). Disordered regions lie at residues 320–344 (MAEN…LQPE) and 444–476 (RKNS…AGFT). Lys324 participates in a covalent cross-link: Glycyl lysine isopeptide (Lys-Gly) (interchain with G-Cter in SUMO2). A compositionally biased stretch (polar residues) spans 464-476 (LHQSPLSATAGFT). Phosphoserine is present on residues Ser511 and Ser514. The segment at 525–547 (RTKMSSHHLSHHPCSPAHPPSTA) is disordered. A Phosphoserine modification is found at Ser557. Residues 577–635 (QEGLSPNHLKKAKLMFFYTRYPSSNMLKTYFSDVKFNRCITSQLIKWFSNFREFYYIQM) enclose the Prospero-type homeo domain. The tract at residues 577–735 (QEGLSPNHLK…KSPNCLQELL (159 aa)) is homeo-Prospero. One can recognise a Prospero domain in the interval 636–735 (EKYARQAIND…KSPNCLQELL (100 aa)). Residues 723 to 729 (EIFKSPN) form an essential for nuclear localization, interaction with RORG, repression of RORG transcriptional activator activity region.

Belongs to the Prospero homeodomain family. In terms of assembly, interacts with RORA and RORG (via AF-2 motif). Expressed in the young neurons of the subventricular region of the CNS, developing eye lens and pancreas. It is also found in the developing liver, heart and skeletal muscle. In the eye, expressed in the lens and retina at postnatal day 10. In the retina, localized to the inner nuclear layer. In the lens, localized to epithelial and fiber cells.

It is found in the nucleus. Its function is as follows. Transcription factor involved in developmental processes such as cell fate determination, gene transcriptional regulation and progenitor cell regulation in a number of organs. Plays a critical role in embryonic development and functions as a key regulatory protein in neurogenesis and the development of the heart, eye lens, liver, pancreas and the lymphatic system. Involved in the regulation of the circadian rhythm. Represses: transcription of the retinoid-related orphan receptor RORG, transcriptional activator activity of RORA and RORG and the expression of RORA/G-target genes including core clock components: BMAL1, NPAS2 and CRY1 and metabolic genes: AVPR1A and ELOVL3. In Mus musculus (Mouse), this protein is Prospero homeobox protein 1 (Prox1).